Here is a 411-residue protein sequence, read N- to C-terminus: Ornithine aminotransferase (411 aa).

At Lys-257 the chain carries N6-(pyridoxal phosphate)lysine.

Belongs to the class-III pyridoxal-phosphate-dependent aminotransferase family. OAT subfamily. Pyridoxal 5'-phosphate is required as a cofactor.

The protein localises to the cytoplasm. The enzyme catalyses a 2-oxocarboxylate + L-ornithine = L-glutamate 5-semialdehyde + an L-alpha-amino acid. It functions in the pathway amino-acid biosynthesis; L-proline biosynthesis; L-glutamate 5-semialdehyde from L-ornithine: step 1/1. Functionally, catalyzes the interconversion of ornithine to glutamate semialdehyde. The protein is Ornithine aminotransferase of Bordetella bronchiseptica (strain ATCC BAA-588 / NCTC 13252 / RB50) (Alcaligenes bronchisepticus).